The following is a 230-amino-acid chain: Orotidine 5'-phosphate decarboxylase (230 aa).

Substrate is bound by residues Asp-10, Lys-31, 58–67, Thr-117, Arg-179, Gln-188, Gly-208, and Arg-209; that span reads DLKLHDIPNT. Lys-60 serves as the catalytic Proton donor.

This sequence belongs to the OMP decarboxylase family. Type 1 subfamily. As to quaternary structure, homodimer.

The catalysed reaction is orotidine 5'-phosphate + H(+) = UMP + CO2. It functions in the pathway pyrimidine metabolism; UMP biosynthesis via de novo pathway; UMP from orotate: step 2/2. Its function is as follows. Catalyzes the decarboxylation of orotidine 5'-monophosphate (OMP) to uridine 5'-monophosphate (UMP). The sequence is that of Orotidine 5'-phosphate decarboxylase from Staphylococcus epidermidis (strain ATCC 12228 / FDA PCI 1200).